The following is a 61-amino-acid chain: MAKKSMIAKQQRTPKFAVRAYTRCSVCGRPHSVYRDFGLCRVCLRKMANEGLLPGVRKASW.

Cys24, Cys27, Cys40, and Cys43 together coordinate Zn(2+).

This sequence belongs to the universal ribosomal protein uS14 family. Zinc-binding uS14 subfamily. As to quaternary structure, part of the 30S ribosomal subunit. Contacts proteins S3 and S10. Requires Zn(2+) as cofactor.

Its function is as follows. Binds 16S rRNA, required for the assembly of 30S particles and may also be responsible for determining the conformation of the 16S rRNA at the A site. In Aliarcobacter butzleri (strain RM4018) (Arcobacter butzleri), this protein is Small ribosomal subunit protein uS14.